A 194-amino-acid polypeptide reads, in one-letter code: 7-methyl-GTP pyrophosphatase (194 aa).

Asp69 acts as the Proton acceptor in catalysis.

Belongs to the Maf family. YceF subfamily. The cofactor is a divalent metal cation.

The protein localises to the cytoplasm. It carries out the reaction N(7)-methyl-GTP + H2O = N(7)-methyl-GMP + diphosphate + H(+). In terms of biological role, nucleoside triphosphate pyrophosphatase that hydrolyzes 7-methyl-GTP (m(7)GTP). May have a dual role in cell division arrest and in preventing the incorporation of modified nucleotides into cellular nucleic acids. This is 7-methyl-GTP pyrophosphatase (yceF) from Shigella flexneri.